A 428-amino-acid chain; its full sequence is Pyruvate dehydrogenase E1 component subunit alpha-3, chloroplastic (428 aa).

Residues 1-61 constitute a chloroplast transit peptide; the sequence is MATAFAPTKL…NATRRSPVVS (61 aa). The pyruvate site is built by H115, Y141, R142, A190, I192, D227, G228, and N256. Positions 141, 142, 190, 192, 227, 228, 256, and 325 each coordinate thiamine diphosphate. D227 is a Mg(2+) binding site. Residue N256 coordinates Mg(2+).

In terms of assembly, tetramer of 2 alpha and 2 beta subunits. Thiamine diphosphate serves as cofactor. It depends on Mg(2+) as a cofactor.

The protein localises to the plastid. The protein resides in the chloroplast. The catalysed reaction is N(6)-[(R)-lipoyl]-L-lysyl-[protein] + pyruvate + H(+) = N(6)-[(R)-S(8)-acetyldihydrolipoyl]-L-lysyl-[protein] + CO2. In terms of biological role, the pyruvate dehydrogenase complex catalyzes the overall conversion of pyruvate to acetyl-CoA and CO(2). It contains multiple copies of three enzymatic components: pyruvate dehydrogenase (E1), dihydrolipoamide acetyltransferase (E2) and lipoamide dehydrogenase (E3). The polypeptide is Pyruvate dehydrogenase E1 component subunit alpha-3, chloroplastic (PDH-E1 ALPHA) (Arabidopsis thaliana (Mouse-ear cress)).